A 256-amino-acid chain; its full sequence is Adenylate kinase (256 aa).

49–54 is an ATP binding site; it reads GAGKGT. An NMP region spans residues 69 to 98; that stretch reads ATGDMLREQVQQKTPLGIEAKKIMDAGGLV. Residues threonine 70, arginine 75, 96–98, 125–128, and glutamine 132 each bind AMP; these read GLV and GFPR. Positions 166 to 203 are LID; sequence GRLVHPASGRSYHKEFNPPKKRNVDDVTGEPLIQRSDD. Residues arginine 167 and 176-177 each bind ATP; that span reads SY. Positions 200 and 211 each coordinate AMP. Glutamine 239 contacts ATP.

This sequence belongs to the adenylate kinase family. AK2 subfamily. As to quaternary structure, monomer.

The protein localises to the cytoplasm. Its subcellular location is the cytosol. It is found in the mitochondrion intermembrane space. It catalyses the reaction AMP + ATP = 2 ADP. Its function is as follows. Catalyzes the reversible transfer of the terminal phosphate group between ATP and AMP. Plays an important role in cellular energy homeostasis and in adenine nucleotide metabolism. Adenylate kinase activity is critical for regulation of the phosphate utilization and the AMP de novo biosynthesis pathways. The chain is Adenylate kinase from Laccaria bicolor (strain S238N-H82 / ATCC MYA-4686) (Bicoloured deceiver).